A 478-amino-acid chain; its full sequence is Multidrug resistance outer membrane protein MdtQ (478 aa).

Residues 1-21 form the signal peptide; sequence MNRDSFYPAIACFPLLLMLAG. Cysteine 22 carries the N-palmitoyl cysteine lipid modification. A lipid anchor (S-diacylglycerol cysteine) is attached at cysteine 22.

Belongs to the outer membrane factor (OMF) (TC 1.B.17) family.

It is found in the cell outer membrane. In terms of biological role, could be involved in resistance to puromycin, acriflavine and tetraphenylarsonium chloride. The protein is Multidrug resistance outer membrane protein MdtQ (mdtQ) of Escherichia coli O6:H1 (strain CFT073 / ATCC 700928 / UPEC).